The chain runs to 458 residues: SH2 domain-containing protein 7 (458 aa).

In terms of domain architecture, SH2 spans 51-142; sequence WFHGFITRKQ…PFGETLAAAC (92 aa). Disordered stretches follow at residues 204 to 235 and 267 to 326; these read RSVS…SPAG and AGSL…TLGS. Residues 278–288 show a composition bias toward basic and acidic residues; it reads PSGKLSDEDQN. Residues 304 to 326 are compositionally biased toward polar residues; sequence QGSTMPYTSLGFSLPPSSETLGS.

The sequence is that of SH2 domain-containing protein 7 (Sh2d7) from Mus musculus (Mouse).